Reading from the N-terminus, the 839-residue chain is Probable beta-glucosidase I (839 aa).

N-linked (GlcNAc...) asparagine glycosylation occurs at asparagine 197. Aspartate 225 is a catalytic residue. The 161-residue stretch at 395–555 folds into the PA14 domain; the sequence is DGKKGFSFRV…SQEELIAKAA (161 aa).

The protein belongs to the glycosyl hydrolase 3 family.

Its subcellular location is the secreted. The catalysed reaction is Hydrolysis of terminal, non-reducing beta-D-glucosyl residues with release of beta-D-glucose.. The protein operates within glycan metabolism; cellulose degradation. Its function is as follows. Beta-glucosidases are one of a number of cellulolytic enzymes involved in the degradation of cellulosic biomass. Catalyzes the last step releasing glucose from the inhibitory cellobiose. This is Probable beta-glucosidase I (bglI) from Aspergillus terreus (strain NIH 2624 / FGSC A1156).